Reading from the N-terminus, the 505-residue chain is Hexose transporter 1 (505 aa).

Residues 1–27 lie on the Cytoplasmic side of the membrane; sequence MNILRMDILSRGGTQEIEHRDGFFNTS. Residues 28 to 48 traverse the membrane as a helical segment; sequence FQYVLSACLASFIFGYQVSVL. Residues 49–78 lie on the Extracellular side of the membrane; the sequence is NTIKSYIVVEFEWCSTKTDTSCEDSILKSS. Cysteine 62 and cysteine 70 are oxidised to a cystine. The helical transmembrane segment at 79-99 threads the bilayer; sequence FLLASVFIGAVLGSGFSGYLV. Over 100-104 the chain is Cytoplasmic; the sequence is KFGRR. Residues 105 to 125 traverse the membrane as a helical segment; that stretch reads FSLMVIYIFFIFVSILTAISH. Residues 126 to 134 are Extracellular-facing; sequence HFHTILYAR. The helical transmembrane segment at 135 to 155 threads the bilayer; sequence LLSGFGIGLITVSVPMYISEM. Residues 156 to 165 lie on the Cytoplasmic side of the membrane; that stretch reads THKDKKGAYG. The helical transmembrane segment at 166–186 threads the bilayer; that stretch reads VLHQLFITFGIFVAVLLGLFL. Residue glutamine 169 participates in alpha-D-glucose binding. Glutamine 169 is a beta-D-glucose binding site. Residues 187 to 208 lie on the Extracellular side of the membrane; that stretch reads GDGPKINGKSIELSNFEMFWWR. Residues 209-229 traverse the membrane as a helical segment; the sequence is FMFFLPTIISLLGIILLIAFY. The Cytoplasmic portion of the chain corresponds to 230–294; sequence KEETPYFLYE…SALKIPAYRN (65 aa). The helical transmembrane segment at 295-315 threads the bilayer; that stretch reads VIILGCILSGFQQFTGINVLV. Alpha-D-glucose-binding residues include glutamine 306, glutamine 307, and asparagine 312. Position 306 (glutamine 306) interacts with beta-D-glucose. Beta-D-glucose is bound at residue asparagine 312. Residues 316 to 332 lie on the Extracellular side of the membrane; it reads ANSNELYKEFLDKNLIT. The chain crosses the membrane as a helical span at residues 333–353; the sequence is ILSVIMTAVNFLMTFPAIYII. Residue asparagine 342 coordinates beta-D-glucose. Residues 354–358 lie on the Cytoplasmic side of the membrane; it reads EKIGR. A helical membrane pass occupies residues 359-379; that stretch reads KTLLLGGCIGVICAFLPTVIA. Over 380-393 the chain is Extracellular; that stretch reads RQVWGPTKIVNGLS. The helical transmembrane segment at 394-414 threads the bilayer; it reads IAGTFLMIISFAVSYGPVLWI. An alpha-D-glucose-binding site is contributed by tryptophan 413. Residues 415–430 are Cytoplasmic-facing; that stretch reads YLHEMYPSEIKDSAAS. The chain crosses the membrane as a helical span at residues 431–451; the sequence is LASLINWVCAIIVVFPSDIII. Residues 452–456 lie on the Extracellular side of the membrane; that stretch reads KKSPS. Residues 457–477 form a helical membrane-spanning segment; that stretch reads ILFMFFSVMCIIAFLFIMFFI. The Cytoplasmic portion of the chain corresponds to 478–505; that stretch reads KETKGGEIGTSPYISLEERQKHIGKSKV.

It belongs to the major facilitator superfamily. Sugar transporter (TC 2.A.1.1) family. As to quaternary structure, homodimer.

The protein localises to the cell membrane. It carries out the reaction D-glucose(out) = D-glucose(in). It catalyses the reaction D-fructose(out) = D-fructose(in). The catalysed reaction is D-galactose(in) = D-galactose(out). The enzyme catalyses D-mannose(out) = D-mannose(in). It carries out the reaction D-glucosamine(out) = D-glucosamine(in). It catalyses the reaction D-xylose(out) = D-xylose(in). Inhibited by cytochalasin B. Functionally, sodium-independent facilitative hexose transporter. Can transport D-glucose and D-fructose. Can transport D-mannose, D-galactose, D-xylose and D-glucosamine. This chain is Hexose transporter 1, found in Plasmodium yoelii yoelii.